The chain runs to 561 residues: Putative transport protein YbjL (561 aa).

The next 5 membrane-spanning stretches (helical) occupy residues 8-28 (LLNG…LCLG), 32-52 (LGSI…LLGQ), 66-86 (FMLF…SIFF), 94-114 (MLAL…GKLF), and 158-178 (NLSL…IVGA). RCK C-terminal domains are found at residues 202–288 (LDTD…SFRN) and 292–373 (VFDR…RIGF). Helical transmembrane passes span 383 to 403 (LLAF…TFQF), 406 to 426 (FSFG…LGFM), 451 to 471 (VFMA…LGAI), 475 to 495 (MLVA…LFGA), and 540 to 560 (AIAN…WPGL).

It belongs to the AAE transporter (TC 2.A.81) family. YbjL subfamily.

The protein resides in the cell membrane. The protein is Putative transport protein YbjL of Escherichia fergusonii (strain ATCC 35469 / DSM 13698 / CCUG 18766 / IAM 14443 / JCM 21226 / LMG 7866 / NBRC 102419 / NCTC 12128 / CDC 0568-73).